The following is a 438-amino-acid chain: ATP phosphoribosyltransferase regulatory subunit (438 aa).

It belongs to the class-II aminoacyl-tRNA synthetase family. HisZ subfamily. In terms of assembly, heteromultimer composed of HisG and HisZ subunits.

It is found in the cytoplasm. Its pathway is amino-acid biosynthesis; L-histidine biosynthesis; L-histidine from 5-phospho-alpha-D-ribose 1-diphosphate: step 1/9. Functionally, required for the first step of histidine biosynthesis. May allow the feedback regulation of ATP phosphoribosyltransferase activity by histidine. This chain is ATP phosphoribosyltransferase regulatory subunit, found in Geobacter sulfurreducens (strain ATCC 51573 / DSM 12127 / PCA).